Reading from the N-terminus, the 429-residue chain is Adenylosuccinate synthetase (429 aa).

GTP-binding positions include G12–K18 and G40–T42. The active-site Proton acceptor is the D13. Mg(2+)-binding residues include D13 and G40. IMP is bound by residues D13–K16, N38–H41, T129, R143, Q223, T238, and R302. The Proton donor role is filled by H41. T298–R304 contacts substrate. GTP-binding positions include R304, K330 to D332, and S412 to S414.

It belongs to the adenylosuccinate synthetase family. In terms of assembly, homodimer. Mg(2+) is required as a cofactor.

The protein resides in the cytoplasm. It carries out the reaction IMP + L-aspartate + GTP = N(6)-(1,2-dicarboxyethyl)-AMP + GDP + phosphate + 2 H(+). Its pathway is purine metabolism; AMP biosynthesis via de novo pathway; AMP from IMP: step 1/2. In terms of biological role, plays an important role in the de novo pathway of purine nucleotide biosynthesis. Catalyzes the first committed step in the biosynthesis of AMP from IMP. This chain is Adenylosuccinate synthetase, found in Novosphingobium aromaticivorans (strain ATCC 700278 / DSM 12444 / CCUG 56034 / CIP 105152 / NBRC 16084 / F199).